A 222-amino-acid polypeptide reads, in one-letter code: UPF0173 metal-dependent hydrolase Mboo_0816 (222 aa).

This sequence belongs to the UPF0173 family.

The protein is UPF0173 metal-dependent hydrolase Mboo_0816 of Methanoregula boonei (strain DSM 21154 / JCM 14090 / 6A8).